Here is a 257-residue protein sequence, read N- to C-terminus: Transcription factor LBX2 (257 aa).

Residues 1-43 (MTSSSKDMKAGSVLQSSGEERRRGPLDQLPPPANSNKPLTPFS) are disordered. The segment at 1–46 (MTSSSKDMKAGSVLQSSGEERRRGPLDQLPPPANSNKPLTPFSIED) is required for convergent extension movement and hypaxial myogenesis during gastrulation. Required for the formation of thick and thin myofilaments. Required for myod1 expression in the pectoral fin bud. Required for continuous expression of cxcl12a in the posterior lateral mesoderm at the tail bud stage and in adaxial cells at the 10-somite stage. The segment at residues 126 to 185 (RRKSRTAFTNHQIYELEKRFLYQKYLSPADRDQIAQQLGLTNAQVITWFQNRRAKLKRDL) is a DNA-binding region (homeobox). The segment at 206–257 (LVSMEDMEDAHGGSGPISPSLSPRAFPQSPSSSRGQTTDEFSEEDEEIEVDD) is disordered. The span at 233-243 (QSPSSSRGQTT) shows a compositional bias: polar residues. Over residues 245–257 (EFSEEDEEIEVDD) the composition is skewed to acidic residues.

In terms of assembly, interacts (via N-terminus) with tle3a/gro2 (via C-terminus).

The protein localises to the nucleus. Transcription factor required in several developmental processes. Involved in axis formation during embryonic development by inhibiting tle3a/gro2 from binding to tcf7l1a, thereby facilitating ctnnb1-mediated transcription of canonical Wnt/CTNNB1 signaling target genes. Regulates convergent extension movements and hypaxial myogenesis during gastrulation by activating non-canonical Wnt signaling via wnt5b. Required for the formation of myofibrils and fusion of fast muscle precursor cells, potentially via transcriptional regulation of genes specific to thick and thin myofilaments. Regulates the migration of the posterior lateral line primordium during embryonic development, possibly via regulation of cxcl12a/sdf1a expression in the posterior lateral mesoderm, thereby modulating the deposition of neuromasts at correct intervals. The sequence is that of Transcription factor LBX2 from Danio rerio (Zebrafish).